The primary structure comprises 162 residues: Corticoliberin-1 (162 aa).

A signal peptide spans 1-24 (MKLNFLVTTVALLVAFPPPYECRA). Positions 25–119 (IDSSSNQPAT…ALDSEERERR (95 aa)) are excised as a propeptide. Phe160 is modified (phenylalanine amide).

It belongs to the sauvagine/corticotropin-releasing factor/urotensin I family.

It localises to the secreted. Functionally, this hormone from hypothalamus regulates the release of corticotropin from pituitary gland. This chain is Corticoliberin-1 (crf1), found in Catostomus commersonii (White sucker).